The primary structure comprises 183 residues: MRPQLRGNQRNRIRWWQHNSKKCNQTEKWHNVDWISKQPLRGRTRRDRLLHELDAASQSDPLPGGDGLTGGDSKATRRTSPRYYPPSEATAGRWPVDRFLRVPLQRAPDPRLRTIHPVTESALARKSRGLAGVTRQIHRAVPQHIADYNDGGDMGSRFDNLPGVAASVEACGNHVLVTRRSRT.

A disordered region spans residues 54-89; sequence DAASQSDPLPGGDGLTGGDSKATRRTSPRYYPPSEA.

This is an uncharacterized protein from Human cytomegalovirus (strain AD169) (HHV-5).